Reading from the N-terminus, the 256-residue chain is Thiazole synthase (256 aa).

The active-site Schiff-base intermediate with DXP is lysine 95. 1-deoxy-D-xylulose 5-phosphate contacts are provided by residues glycine 156, 182–183 (AG), and 204–205 (NT).

It belongs to the ThiG family. As to quaternary structure, homotetramer. Forms heterodimers with either ThiH or ThiS.

Its subcellular location is the cytoplasm. The catalysed reaction is [ThiS sulfur-carrier protein]-C-terminal-Gly-aminoethanethioate + 2-iminoacetate + 1-deoxy-D-xylulose 5-phosphate = [ThiS sulfur-carrier protein]-C-terminal Gly-Gly + 2-[(2R,5Z)-2-carboxy-4-methylthiazol-5(2H)-ylidene]ethyl phosphate + 2 H2O + H(+). The protein operates within cofactor biosynthesis; thiamine diphosphate biosynthesis. Catalyzes the rearrangement of 1-deoxy-D-xylulose 5-phosphate (DXP) to produce the thiazole phosphate moiety of thiamine. Sulfur is provided by the thiocarboxylate moiety of the carrier protein ThiS. In vitro, sulfur can be provided by H(2)S. In Escherichia coli (strain 55989 / EAEC), this protein is Thiazole synthase.